The chain runs to 150 residues: Transcriptional regulator MraZ (150 aa).

SpoVT-AbrB domains are found at residues 5 to 52 (VTHL…PLPD) and 81 to 124 (AHDL…DAEA).

It belongs to the MraZ family. Forms oligomers.

It is found in the cytoplasm. It localises to the nucleoid. The protein is Transcriptional regulator MraZ of Alkalilimnicola ehrlichii (strain ATCC BAA-1101 / DSM 17681 / MLHE-1).